The primary structure comprises 41 residues: Photosystem I reaction center subunit VIII (41 aa).

Residues 12–32 (WIMIPVTCWLFPVVVMGLLFI) form a helical membrane-spanning segment.

Belongs to the PsaI family.

The protein resides in the cellular thylakoid membrane. Functionally, may help in the organization of the PsaL subunit. This Cyanothece sp. (strain PCC 7425 / ATCC 29141) protein is Photosystem I reaction center subunit VIII.